A 79-amino-acid polypeptide reads, in one-letter code: Protein S100-G (79 aa).

N-acetylserine is present on S2. 2 EF-hand domains span residues 13 to 48 and 45 to 79; these read IFEKYAAKEGDPDQLSKDELKLLIQAEFPSLLKGPN and KGPNTLDDLFQELDKNGDGEVSFEEFQVLVKKISQ. 2 residues coordinate Ca(2+): Q26 and E31. S42 bears the Phosphoserine mark. Residues D58, N60, D62, E64, and E69 each contribute to the Ca(2+) site.

Belongs to the S-100 family.

This chain is Protein S100-G (S100G), found in Homo sapiens (Human).